The following is a 71-amino-acid chain: Translation initiation factor IF-1 (71 aa).

In terms of domain architecture, S1-like spans 1 to 71 (MSKDDLIQFT…LTKGRVIHRH (71 aa)).

Belongs to the IF-1 family. As to quaternary structure, component of the 30S ribosomal translation pre-initiation complex which assembles on the 30S ribosome in the order IF-2 and IF-3, IF-1 and N-formylmethionyl-tRNA(fMet); mRNA recruitment can occur at any time during PIC assembly.

The protein resides in the cytoplasm. Functionally, one of the essential components for the initiation of protein synthesis. Stabilizes the binding of IF-2 and IF-3 on the 30S subunit to which N-formylmethionyl-tRNA(fMet) subsequently binds. Helps modulate mRNA selection, yielding the 30S pre-initiation complex (PIC). Upon addition of the 50S ribosomal subunit IF-1, IF-2 and IF-3 are released leaving the mature 70S translation initiation complex. This is Translation initiation factor IF-1 from Rickettsia akari (strain Hartford).